A 623-amino-acid chain; its full sequence is Putative ABC transporter ATP-binding protein MG014 homolog (623 aa).

The 310-residue stretch at 16-325 (LILAPLFTFA…YIVLGLILTS (310 aa)) folds into the ABC transmembrane type-1 domain. The next 6 helical transmembrane spans lie at 27–47 (IIID…VFSI), 86–106 (VILL…CASI), 157–177 (FLRL…FAIA), 180–200 (SDMS…IGIL), 266–286 (NIPF…LLVF), and 307–327 (IFAF…TSLT). The ABC transporter domain occupies 365 to 611 (LEFKNVAFGL…CDIYVKMKQA (247 aa)). 400–407 (GPTGSGKS) serves as a coordination point for ATP.

The protein belongs to the ABC transporter superfamily.

It localises to the cell membrane. The chain is Putative ABC transporter ATP-binding protein MG014 homolog from Mycoplasma pneumoniae (strain ATCC 29342 / M129 / Subtype 1) (Mycoplasmoides pneumoniae).